The chain runs to 372 residues: Cytochrome b (372 aa).

The next 4 membrane-spanning stretches (helical) occupy residues 25 to 45, 69 to 90, 105 to 125, and 170 to 190; these read FGSM…FLSM, WMMQ…YIHV, WLSG…GYVL, and FFAL…LHIM. Heme b-binding residues include histidine 75 and histidine 89. Residues histidine 174 and histidine 188 each contribute to the heme b site. Histidine 193 contributes to the a ubiquinone binding site. 4 helical membrane passes run 218 to 238, 280 to 300, 312 to 332, and 339 to 358; these read YKDL…ISFI, LGGA…PFTH, FMQL…WTAT, and YTMI…MSNP.

It belongs to the cytochrome b family. As to quaternary structure, the cytochrome bc1 complex contains 3 respiratory subunits (MT-CYB, CYC1 and UQCRFS1), 2 core proteins (UQCRC1 and UQCRC2) and probably 6 low-molecular weight proteins. Requires heme b as cofactor.

It is found in the mitochondrion inner membrane. Its function is as follows. Component of the ubiquinol-cytochrome c reductase complex (complex III or cytochrome b-c1 complex) that is part of the mitochondrial respiratory chain. The b-c1 complex mediates electron transfer from ubiquinol to cytochrome c. Contributes to the generation of a proton gradient across the mitochondrial membrane that is then used for ATP synthesis. This Acrantophis dumerili (Dumeril's ground boa) protein is Cytochrome b (MT-CYB).